A 427-amino-acid polypeptide reads, in one-letter code: Glutamate-1-semialdehyde 2,1-aminomutase (427 aa).

Residue K265 is modified to N6-(pyridoxal phosphate)lysine.

Belongs to the class-III pyridoxal-phosphate-dependent aminotransferase family. HemL subfamily. Homodimer. Pyridoxal 5'-phosphate is required as a cofactor.

Its subcellular location is the cytoplasm. It carries out the reaction (S)-4-amino-5-oxopentanoate = 5-aminolevulinate. The protein operates within porphyrin-containing compound metabolism; protoporphyrin-IX biosynthesis; 5-aminolevulinate from L-glutamyl-tRNA(Glu): step 2/2. The polypeptide is Glutamate-1-semialdehyde 2,1-aminomutase (Bordetella bronchiseptica (strain ATCC BAA-588 / NCTC 13252 / RB50) (Alcaligenes bronchisepticus)).